Here is a 407-residue protein sequence, read N- to C-terminus: Amylovoran biosynthesis glycosyltransferase AmsK (407 aa).

This sequence belongs to the glycosyltransferase group 1 family. Glycosyltransferase 4 subfamily.

It functions in the pathway glycan metabolism; exopolysaccharide biosynthesis. In terms of biological role, involved in the biosynthesis of amylovoran which functions as a virulence factor. The sequence is that of Amylovoran biosynthesis glycosyltransferase AmsK (amsK) from Erwinia amylovora (Fire blight bacteria).